The chain runs to 247 residues: AA9 family lytic polysaccharide monooxygenase A (247 aa).

Residues 1–19 form the signal peptide; it reads MVRLASLAVLGSVIATASA. The Cu(2+) site is built by H20 and H100. A disulfide bridge links C60 with C185. H165 is an O2 binding site. Y182 provides a ligand contact to Cu(2+). N193 carries an N-linked (GlcNAc...) asparagine glycan.

It belongs to the polysaccharide monooxygenase AA9 family. Cu(2+) is required as a cofactor.

It is found in the secreted. The catalysed reaction is [(1-&gt;4)-beta-D-glucosyl]n+m + reduced acceptor + O2 = 4-dehydro-beta-D-glucosyl-[(1-&gt;4)-beta-D-glucosyl]n-1 + [(1-&gt;4)-beta-D-glucosyl]m + acceptor + H2O.. Lytic polysaccharide monooxygenase (LPMO) that depolymerizes polysaccharides via the oxidation of scissile alpha- or beta-(1-4)-glycosidic bonds, yielding C4 oxidation products. Catalysis by LPMOs requires the reduction of the active-site copper from Cu(II) to Cu(I) by a reducing agent and H(2)O(2) or O(2) as a cosubstrate. Shows C4-oxidative cleavage of amorphous cellulose and soluble cello-oligosaccharides. Also active on xyloglucan, mixed-linkage beta-glucan, and glucomannan. Not active on crystalline forms of cellulose. Has higher affinity for linear substrates compared to branched substrates. Catalyzes a fast and specific peroxygenase reaction that is at least two orders of magnitude faster than the apparent monooxygenase reaction. The chain is AA9 family lytic polysaccharide monooxygenase A from Schizophyllum commune (strain H4-8 / FGSC 9210) (Split gill fungus).